The following is a 177-amino-acid chain: Probable chemoreceptor glutamine deamidase CheD (177 aa).

Belongs to the CheD family.

The catalysed reaction is L-glutaminyl-[protein] + H2O = L-glutamyl-[protein] + NH4(+). Probably deamidates glutamine residues to glutamate on methyl-accepting chemotaxis receptors (MCPs), playing an important role in chemotaxis. This Pseudomonas savastanoi pv. phaseolicola (strain 1448A / Race 6) (Pseudomonas syringae pv. phaseolicola (strain 1448A / Race 6)) protein is Probable chemoreceptor glutamine deamidase CheD.